A 119-amino-acid polypeptide reads, in one-letter code: Large ribosomal subunit protein uL18 (119 aa).

The tract at residues methionine 1 to glycine 20 is disordered. The span at threonine 10–glycine 20 shows a compositional bias: basic residues.

It belongs to the universal ribosomal protein uL18 family. As to quaternary structure, part of the 50S ribosomal subunit; part of the 5S rRNA/L5/L18/L25 subcomplex. Contacts the 5S and 23S rRNAs.

Its function is as follows. This is one of the proteins that bind and probably mediate the attachment of the 5S RNA into the large ribosomal subunit, where it forms part of the central protuberance. The chain is Large ribosomal subunit protein uL18 from Latilactobacillus sakei subsp. sakei (strain 23K) (Lactobacillus sakei subsp. sakei).